The following is a 492-amino-acid chain: Protein nucleotidyltransferase YdiU (492 aa).

Residues glycine 91, glycine 93, arginine 94, lysine 114, aspartate 126, glycine 127, arginine 180, and arginine 187 each contribute to the ATP site. Aspartate 256 (proton acceptor) is an active-site residue. Residues asparagine 257 and aspartate 266 each contribute to the Mg(2+) site. ATP is bound at residue aspartate 266.

Belongs to the SELO family. It depends on Mg(2+) as a cofactor. The cofactor is Mn(2+).

It carries out the reaction L-seryl-[protein] + ATP = 3-O-(5'-adenylyl)-L-seryl-[protein] + diphosphate. The catalysed reaction is L-threonyl-[protein] + ATP = 3-O-(5'-adenylyl)-L-threonyl-[protein] + diphosphate. It catalyses the reaction L-tyrosyl-[protein] + ATP = O-(5'-adenylyl)-L-tyrosyl-[protein] + diphosphate. The enzyme catalyses L-histidyl-[protein] + UTP = N(tele)-(5'-uridylyl)-L-histidyl-[protein] + diphosphate. It carries out the reaction L-seryl-[protein] + UTP = O-(5'-uridylyl)-L-seryl-[protein] + diphosphate. The catalysed reaction is L-tyrosyl-[protein] + UTP = O-(5'-uridylyl)-L-tyrosyl-[protein] + diphosphate. Nucleotidyltransferase involved in the post-translational modification of proteins. It can catalyze the addition of adenosine monophosphate (AMP) or uridine monophosphate (UMP) to a protein, resulting in modifications known as AMPylation and UMPylation. The protein is Protein nucleotidyltransferase YdiU of Synechococcus sp. (strain ATCC 27144 / PCC 6301 / SAUG 1402/1) (Anacystis nidulans).